An 87-amino-acid polypeptide reads, in one-letter code: uncharacterized protein (87 aa).

Belongs to the SF3B5 family.

This is an uncharacterized protein from Arabidopsis thaliana (Mouse-ear cress).